A 322-amino-acid chain; its full sequence is Lymphatic vessel endothelial hyaluronic acid receptor 1 (322 aa).

Residues Met-1–Leu-19 form the signal peptide. The Extracellular segment spans residues Leu-20–Thr-238. The Link domain occupies Gly-40–Asn-130. N-linked (GlcNAc...) asparagine glycosylation is present at Asn-53. Intrachain disulfides connect Cys-61–Cys-128 and Cys-85–Cys-106. N-linked (GlcNAc...) asparagine glycosylation is present at Asn-130. The chain crosses the membrane as a helical span at residues Ala-239–Val-259. The Cytoplasmic portion of the chain corresponds to Lys-260 to Val-322. Basic and acidic residues predominate over residues Glu-279–Ser-309. Positions Glu-279 to Val-322 are disordered.

As to quaternary structure, homodimer; disulfide-linked. Interacts with PDGFB and IGFBP3. Forms a transient ternary complex with PDGFB and PDGFRB in TGN. Post-translationally, O-glycosylated. In terms of tissue distribution, mainly expressed in endothelial cells lining lymphatic vessels.

The protein resides in the cell membrane. Its function is as follows. Ligand-specific transporter trafficking between intracellular organelles (TGN) and the plasma membrane. Plays a role in autocrine regulation of cell growth mediated by growth regulators containing cell surface retention sequence binding (CRS). May act as a hyaluronan (HA) transporter, either mediating its uptake for catabolism within lymphatic endothelial cells themselves, or its transport into the lumen of afferent lymphatic vessels for subsequent re-uptake and degradation in lymph nodes. Binds to pericelluar hyaluronan matrices deposited on the surface of leukocytes and facilitates cell adhesion and migration through lymphatic endothelium. The protein is Lymphatic vessel endothelial hyaluronic acid receptor 1 (LYVE1) of Homo sapiens (Human).